The chain runs to 29 residues: Cyclotide mra2 (29 aa).

Disulfide bonds link cysteine 4-cysteine 19, cysteine 8-cysteine 21, and cysteine 13-cysteine 26.

Post-translationally, this is a cyclic peptide. In terms of processing, contains 3 disulfide bonds.

Probably participates in a plant defense mechanism. The polypeptide is Cyclotide mra2 (Melicytus ramiflorus (Whitey wood)).